The primary structure comprises 306 residues: Pyridoxal 5'-phosphate synthase subunit PdxS (306 aa).

A D-ribose 5-phosphate-binding site is contributed by aspartate 36. Lysine 93 acts as the Schiff-base intermediate with D-ribose 5-phosphate in catalysis. D-ribose 5-phosphate is bound at residue glycine 165. Arginine 177 is a D-glyceraldehyde 3-phosphate binding site. Residues glycine 226 and 247-248 contribute to the D-ribose 5-phosphate site; that span reads GS.

The protein belongs to the PdxS/SNZ family. As to quaternary structure, in the presence of PdxT, forms a dodecamer of heterodimers.

The catalysed reaction is aldehydo-D-ribose 5-phosphate + D-glyceraldehyde 3-phosphate + L-glutamine = pyridoxal 5'-phosphate + L-glutamate + phosphate + 3 H2O + H(+). It participates in cofactor biosynthesis; pyridoxal 5'-phosphate biosynthesis. Functionally, catalyzes the formation of pyridoxal 5'-phosphate from ribose 5-phosphate (RBP), glyceraldehyde 3-phosphate (G3P) and ammonia. The ammonia is provided by the PdxT subunit. Can also use ribulose 5-phosphate and dihydroxyacetone phosphate as substrates, resulting from enzyme-catalyzed isomerization of RBP and G3P, respectively. This chain is Pyridoxal 5'-phosphate synthase subunit PdxS, found in Corynebacterium urealyticum (strain ATCC 43042 / DSM 7109).